The chain runs to 92 residues: Small ribosomal subunit protein uS17 (92 aa).

The protein belongs to the universal ribosomal protein uS17 family. Part of the 30S ribosomal subunit.

One of the primary rRNA binding proteins, it binds specifically to the 5'-end of 16S ribosomal RNA. The sequence is that of Small ribosomal subunit protein uS17 from Wigglesworthia glossinidia brevipalpis.